A 140-amino-acid chain; its full sequence is Nucleoside diphosphate kinase (140 aa).

ATP is bound by residues lysine 11, phenylalanine 59, arginine 87, threonine 93, arginine 104, and asparagine 114. The Pros-phosphohistidine intermediate role is filled by histidine 117.

This sequence belongs to the NDK family. Homotetramer. Requires Mg(2+) as cofactor.

Its subcellular location is the cytoplasm. The enzyme catalyses a 2'-deoxyribonucleoside 5'-diphosphate + ATP = a 2'-deoxyribonucleoside 5'-triphosphate + ADP. The catalysed reaction is a ribonucleoside 5'-diphosphate + ATP = a ribonucleoside 5'-triphosphate + ADP. In terms of biological role, major role in the synthesis of nucleoside triphosphates other than ATP. The ATP gamma phosphate is transferred to the NDP beta phosphate via a ping-pong mechanism, using a phosphorylated active-site intermediate. The protein is Nucleoside diphosphate kinase of Rickettsia canadensis (strain McKiel).